The sequence spans 177 residues: Endoribonuclease YbeY (177 aa).

3 residues coordinate Zn(2+): histidine 142, histidine 146, and histidine 152.

The protein belongs to the endoribonuclease YbeY family. It depends on Zn(2+) as a cofactor.

The protein localises to the cytoplasm. Functionally, single strand-specific metallo-endoribonuclease involved in late-stage 70S ribosome quality control and in maturation of the 3' terminus of the 16S rRNA. This chain is Endoribonuclease YbeY, found in Synechococcus sp. (strain CC9311).